The following is a 1811-amino-acid chain: Protein virilizer homolog (1811 aa).

Residue Ala2 is modified to N-acetylalanine. The interval 132 to 302 (ISHDRDSPPP…EGDDGYEQIS (171 aa)) is disordered. Ser133 and Ser138 each carry phosphoserine. A compositionally biased stretch (pro residues) spans 139–152 (PPPPPPPPPPPQPQ). Basic and acidic residues predominate over residues 160-169 (KHADGEKEDQ). A Phosphoserine modification is found at Ser173. Positions 174-190 (PPRPQPRGPRTPPGPPP) are enriched in pro residues. Thr184 carries the post-translational modification Phosphothreonine. Ser222 is modified (phosphoserine). Polar residues predominate over residues 224-233 (DRNSVPQEGQ). 2 stretches are compositionally biased toward acidic residues: residues 234-267 (YSDE…DEDD) and 274-302 (IPDD…EQIS). Tyr913 carries the phosphotyrosine modification. Phosphoserine is present on Ser1578. 2 disordered regions span residues 1615–1634 (HVVP…GIRP) and 1662–1811 (KEVV…SFTR). Residues 1688–1697 (GFSGNRGGRG) are compositionally biased toward gly residues. Thr1707 bears the Phosphothreonine mark. Residue Arg1722 is modified to Omega-N-methylarginine. The segment covering 1722-1747 (RGSSWSAQNTPRGNYNESRGGQSNFN) has biased composition (polar residues). Asymmetric dimethylarginine; alternate is present on Arg1740. Arg1740 bears the Omega-N-methylarginine; alternate mark. Asymmetric dimethylarginine occurs at positions 1772, 1774, and 1792. A compositionally biased stretch (gly residues) spans 1787-1801 (GSGGSRGKFVSGGSG). Over residues 1802-1811 (RGRHVRSFTR) the composition is skewed to basic residues.

The protein belongs to the vir family. As to quaternary structure, component of the WMM complex, a N6-methyltransferase complex composed of a catalytic subcomplex, named MAC, and of an associated subcomplex, named MACOM. The MAC subcomplex is composed of METTL3 and METTL14. The MACOM subcomplex is composed of WTAP, ZC3H13, CBLL1/HAKAI, VIRMA, and, in some cases of RBM15 (RBM15 or RBM15B). Interacts with WTAP. Also a component of a MACOM-like complex, named WTAP complex, composed of WTAP, ZC3H13, CBLL1, VIRMA, RBM15, BCLAF1 and THRAP3. Interacts with NUDT21 and CPSF6.

The protein resides in the nucleus speckle. Its subcellular location is the nucleus. The protein localises to the nucleoplasm. It localises to the cytoplasm. Its function is as follows. Associated component of the WMM complex, a complex that mediates N6-methyladenosine (m6A) methylation of RNAs, a modification that plays a role in the efficiency of mRNA splicing and RNA processing. Acts as a key regulator of m6A methylation by promoting m6A methylation of mRNAs in the 3'-UTR near the stop codon: recruits the catalytic core components METTL3 and METTL14, thereby guiding m6A methylation at specific sites. Required for mRNA polyadenylation via its role in selective m6A methylation: m6A methylation of mRNAs in the 3'-UTR near the stop codon correlating with alternative polyadenylation (APA). This is Protein virilizer homolog from Mus musculus (Mouse).